The sequence spans 90 residues: Probable Fe(2+)-trafficking protein (90 aa).

This sequence belongs to the Fe(2+)-trafficking protein family.

In terms of biological role, could be a mediator in iron transactions between iron acquisition and iron-requiring processes, such as synthesis and/or repair of Fe-S clusters in biosynthetic enzymes. The protein is Probable Fe(2+)-trafficking protein of Photobacterium profundum (strain SS9).